Here is a 285-residue protein sequence, read N- to C-terminus: Geranyl diphosphate 2-C-methyltransferase (285 aa).

The protein belongs to the geranyl diphosphate 2-C-methyltransferase family. Mg(2+) is required as a cofactor.

The enzyme catalyses (2E)-geranyl diphosphate + S-adenosyl-L-methionine = (E)-2-methylgeranyl diphosphate + S-adenosyl-L-homocysteine + H(+). Its function is as follows. Catalyzes the SAM-dependent methylation of geranyl diphosphate (GPP) to yield (E)-2-methylgeranyl diphosphate (2-MeGPP). This Saccharopolyspora erythraea (strain ATCC 11635 / DSM 40517 / JCM 4748 / NBRC 13426 / NCIMB 8594 / NRRL 2338) protein is Geranyl diphosphate 2-C-methyltransferase.